Consider the following 346-residue polypeptide: Holliday junction branch migration complex subunit RuvB (346 aa).

Positions 1-182 (MSEPARLISP…FGIPVRLTFY (182 aa)) are large ATPase domain (RuvB-L). ATP is bound by residues Leu21, Arg22, Gly63, Lys66, Thr67, Thr68, 129-131 (EDY), Arg172, Tyr182, and Arg219. A Mg(2+)-binding site is contributed by Thr67. Residues 183 to 253 (TVEELELIVR…IADEALTRLL (71 aa)) form a small ATPAse domain (RuvB-S) region. Positions 256–346 (NVGFDQLDKR…AQFRLFQEDD (91 aa)) are head domain (RuvB-H). 3 residues coordinate DNA: Arg292, Arg311, and Arg316.

Belongs to the RuvB family. In terms of assembly, homohexamer. Forms an RuvA(8)-RuvB(12)-Holliday junction (HJ) complex. HJ DNA is sandwiched between 2 RuvA tetramers; dsDNA enters through RuvA and exits via RuvB. An RuvB hexamer assembles on each DNA strand where it exits the tetramer. Each RuvB hexamer is contacted by two RuvA subunits (via domain III) on 2 adjacent RuvB subunits; this complex drives branch migration. In the full resolvosome a probable DNA-RuvA(4)-RuvB(12)-RuvC(2) complex forms which resolves the HJ.

It is found in the cytoplasm. It carries out the reaction ATP + H2O = ADP + phosphate + H(+). Its function is as follows. The RuvA-RuvB-RuvC complex processes Holliday junction (HJ) DNA during genetic recombination and DNA repair, while the RuvA-RuvB complex plays an important role in the rescue of blocked DNA replication forks via replication fork reversal (RFR). RuvA specifically binds to HJ cruciform DNA, conferring on it an open structure. The RuvB hexamer acts as an ATP-dependent pump, pulling dsDNA into and through the RuvAB complex. RuvB forms 2 homohexamers on either side of HJ DNA bound by 1 or 2 RuvA tetramers; 4 subunits per hexamer contact DNA at a time. Coordinated motions by a converter formed by DNA-disengaged RuvB subunits stimulates ATP hydrolysis and nucleotide exchange. Immobilization of the converter enables RuvB to convert the ATP-contained energy into a lever motion, pulling 2 nucleotides of DNA out of the RuvA tetramer per ATP hydrolyzed, thus driving DNA branch migration. The RuvB motors rotate together with the DNA substrate, which together with the progressing nucleotide cycle form the mechanistic basis for DNA recombination by continuous HJ branch migration. Branch migration allows RuvC to scan DNA until it finds its consensus sequence, where it cleaves and resolves cruciform DNA. In Rhizobium etli (strain ATCC 51251 / DSM 11541 / JCM 21823 / NBRC 15573 / CFN 42), this protein is Holliday junction branch migration complex subunit RuvB.